Here is a 226-residue protein sequence, read N- to C-terminus: Lipoprotein-releasing system ATP-binding protein LolD (226 aa).

The ABC transporter domain maps to 5–226 (LKATNINKIY…LLRNGHWENY (222 aa)). Residue 41 to 48 (GTSGSGKS) participates in ATP binding.

The protein belongs to the ABC transporter superfamily. Lipoprotein translocase (TC 3.A.1.125) family. The complex is composed of two ATP-binding proteins (LolD) and two transmembrane proteins (LolC and LolE).

Its subcellular location is the cell inner membrane. In terms of biological role, part of the ABC transporter complex LolCDE involved in the translocation of mature outer membrane-directed lipoproteins, from the inner membrane to the periplasmic chaperone, LolA. Responsible for the formation of the LolA-lipoprotein complex in an ATP-dependent manner. In Psychrobacter cryohalolentis (strain ATCC BAA-1226 / DSM 17306 / VKM B-2378 / K5), this protein is Lipoprotein-releasing system ATP-binding protein LolD.